The sequence spans 305 residues: Oxygen-dependent coproporphyrinogen-III oxidase (305 aa).

Residue serine 98 coordinates substrate. A divalent metal cation is bound by residues histidine 102 and histidine 112. Catalysis depends on histidine 112, which acts as the Proton donor. 114–116 (NVR) is a binding site for substrate. Residues histidine 151 and histidine 181 each contribute to the a divalent metal cation site. The tract at residues 246-281 (YVEFNLVYDRGTLFGLQSGGRTESILMSMPPLARWE) is important for dimerization. A substrate-binding site is contributed by 264–266 (GGR).

It belongs to the aerobic coproporphyrinogen-III oxidase family. In terms of assembly, homodimer. Requires a divalent metal cation as cofactor.

It localises to the cytoplasm. The enzyme catalyses coproporphyrinogen III + O2 + 2 H(+) = protoporphyrinogen IX + 2 CO2 + 2 H2O. Its pathway is porphyrin-containing compound metabolism; protoporphyrin-IX biosynthesis; protoporphyrinogen-IX from coproporphyrinogen-III (O2 route): step 1/1. Functionally, involved in the heme biosynthesis. Catalyzes the aerobic oxidative decarboxylation of propionate groups of rings A and B of coproporphyrinogen-III to yield the vinyl groups in protoporphyrinogen-IX. The chain is Oxygen-dependent coproporphyrinogen-III oxidase from Vibrio vulnificus (strain YJ016).